Reading from the N-terminus, the 149-residue chain is MRMNKQIVVTDWIKEKPRLGTFLKLTLNSDERRILRGKRLTDCDQEIILQLPRGGKLNDGDILSTNDSNFYVEIIAKTESLIEISSKSKLELIKTAYHLGNRHVEVEIEKDILLTKGDYLIENMLKNFNVEIVNIQKKFFPERGAHSHE.

Belongs to the UreE family.

The protein localises to the cytoplasm. Its function is as follows. Involved in urease metallocenter assembly. Binds nickel. Probably functions as a nickel donor during metallocenter assembly. In Prochlorococcus marinus (strain MIT 9215), this protein is Urease accessory protein UreE.